A 94-amino-acid chain; its full sequence is Co-chaperonin GroES (94 aa).

This sequence belongs to the GroES chaperonin family. In terms of assembly, heptamer of 7 subunits arranged in a ring. Interacts with the chaperonin GroEL.

The protein localises to the cytoplasm. Together with the chaperonin GroEL, plays an essential role in assisting protein folding. The GroEL-GroES system forms a nano-cage that allows encapsulation of the non-native substrate proteins and provides a physical environment optimized to promote and accelerate protein folding. GroES binds to the apical surface of the GroEL ring, thereby capping the opening of the GroEL channel. The chain is Co-chaperonin GroES from Ehrlichia canis (strain Jake).